A 322-amino-acid chain; its full sequence is Ferredoxin--NADP reductase (322 aa).

Positions 14, 33, 41, 46, 86, 120, 278, and 319 each coordinate FAD.

This sequence belongs to the ferredoxin--NADP reductase type 2 family. In terms of assembly, homodimer. Requires FAD as cofactor.

The enzyme catalyses 2 reduced [2Fe-2S]-[ferredoxin] + NADP(+) + H(+) = 2 oxidized [2Fe-2S]-[ferredoxin] + NADPH. This chain is Ferredoxin--NADP reductase, found in Salinispora arenicola (strain CNS-205).